Here is a 264-residue protein sequence, read N- to C-terminus: Transmembrane protein 41A (264 aa).

The N-terminal stretch at 1 to 17 (MHSLLGLLLVFAGSTFA) is a signal peptide. The next 5 helical transmembrane spans lie at 67 to 87 (VYVF…AIPG), 90 to 110 (FLNV…LCCV), 153 to 173 (LFFF…FLNL), 175 to 195 (APIL…GLIP), and 219 to 239 (WETA…GTLI). The segment at 96 to 207 (GALFGPWLGL…FICVQTGSIL (112 aa)) is VTT domain.

It belongs to the TMEM41 family.

It is found in the membrane. This Bos taurus (Bovine) protein is Transmembrane protein 41A (TMEM41A).